Here is a 469-residue protein sequence, read N- to C-terminus: Putative pyridoxal-dependent decarboxylase domain-containing protein 2 (469 aa).

Positions 12-40 (TLAEMGKNLKEAVKMLEDSQRRTEEENGK) form a coiled coil. Over residues 28–44 (EDSQRRTEEENGKKLIS) the composition is skewed to basic and acidic residues. Residues 28–47 (EDSQRRTEEENGKKLISRDI) are disordered.

It belongs to the group II decarboxylase family. Pyridoxal 5'-phosphate is required as a cofactor.

The protein is Putative pyridoxal-dependent decarboxylase domain-containing protein 2 (PDXDC2P) of Homo sapiens (Human).